Reading from the N-terminus, the 74-residue chain is UPF0435 protein BCB4264_A0471 (74 aa).

Belongs to the UPF0435 family.

In Bacillus cereus (strain B4264), this protein is UPF0435 protein BCB4264_A0471.